Consider the following 195-residue polypeptide: Probable GTP-binding protein EngB (195 aa).

Positions 24-195 (ELPEIALAGR…EAWDAILEKL (172 aa)) constitute an EngB-type G domain. Residues 32 to 39 (GRSNVGKS), 59 to 63 (GKTQL), 77 to 80 (DVPG), 144 to 147 (TKAD), and 176 to 178 (FSS) contribute to the GTP site. 2 residues coordinate Mg(2+): S39 and T61.

The protein belongs to the TRAFAC class TrmE-Era-EngA-EngB-Septin-like GTPase superfamily. EngB GTPase family. Mg(2+) serves as cofactor.

Functionally, necessary for normal cell division and for the maintenance of normal septation. This is Probable GTP-binding protein EngB from Streptococcus pneumoniae serotype 4 (strain ATCC BAA-334 / TIGR4).